Reading from the N-terminus, the 410-residue chain is Elongation factor Tu, apicoplast (410 aa).

A tr-type G domain is found at 10–214 (KQHINLGTIG…QIIDNIIIPT (205 aa)). The tract at residues 19–26 (GHVDHGKT) is G1. 19 to 26 (GHVDHGKT) contacts GTP. A Mg(2+)-binding site is contributed by Thr-26. Residues 60 to 64 (GITIN) are G2. The G3 stretch occupies residues 81–84 (DCPG). GTP-binding positions include 81 to 85 (DCPGH) and 136 to 139 (NKED). The G4 stretch occupies residues 136–139 (NKED). A G5 region spans residues 174 to 176 (SAL).

The protein belongs to the TRAFAC class translation factor GTPase superfamily. Classic translation factor GTPase family. EF-Tu/EF-1A subfamily.

The protein localises to the plastid. It localises to the apicoplast. The enzyme catalyses GTP + H2O = GDP + phosphate + H(+). GTP hydrolase that promotes the GTP-dependent binding of aminoacyl-tRNA to the A-site of ribosomes during protein biosynthesis. This is Elongation factor Tu, apicoplast (tufA) from Plasmodium falciparum (isolate 3D7).